A 470-amino-acid polypeptide reads, in one-letter code: ATP synthase subunit beta (470 aa).

155-162 (GGAGVGKT) contributes to the ATP binding site.

Belongs to the ATPase alpha/beta chains family. In terms of assembly, F-type ATPases have 2 components, CF(1) - the catalytic core - and CF(0) - the membrane proton channel. CF(1) has five subunits: alpha(3), beta(3), gamma(1), delta(1), epsilon(1). CF(0) has three main subunits: a(1), b(2) and c(9-12). The alpha and beta chains form an alternating ring which encloses part of the gamma chain. CF(1) is attached to CF(0) by a central stalk formed by the gamma and epsilon chains, while a peripheral stalk is formed by the delta and b chains.

It is found in the cell membrane. The catalysed reaction is ATP + H2O + 4 H(+)(in) = ADP + phosphate + 5 H(+)(out). In terms of biological role, produces ATP from ADP in the presence of a proton gradient across the membrane. The catalytic sites are hosted primarily by the beta subunits. The polypeptide is ATP synthase subunit beta (Pectinatus frisingensis).